The following is a 453-amino-acid chain: MAVATAPSLNRHFPRRISNLYSRVKQRRPWLPPGDATLFNSRRNWDSHLFVYASSSSSPSSSPPSPNSPTDDLTAELCVNTGLDLFKRGRVKDALVQFETALSLAPNPIESQAAYYNKACCHAYRGEGKKAVDCLRIALRDYNLKFATILNDPDLASFRALPEFKELQEEARLGGEDIGDNFRRDLKLISEVRAPFRGVRKFFYFAFAAAAGISMFFTVPRLVQAIRGGDGAPNLLETTGNAAINIGGIVVMVSLFLWENKKEEEQMVQITRDETLSRLPLRLSTNRVVELVQLRDTVRPVILAGKKETVTLAMQKADRFRTELLRRGVLLVPVVWGERKTPEIEKKGFGASSKAATSLPSIGEDFDTRAQSVVAQSKLKGEIRFKAETVSPGEWERWIRDQQISEGVNPGDDVYIILRLDGRVRRSGRGMPDWAEISKELPPMDDVLSKLER.

The N-terminal 92 residues, 1 to 92 (MAVATAPSLN…LDLFKRGRVK (92 aa)), are a transit peptide targeting the chloroplast. 2 TPR repeats span residues 75–108 (AELCVNTGLDLFKRGRVKDALVQFETALSLAPNP) and 112–145 (QAAYYNKACCHAYRGEGKKAVDCLRIALRDYNLK). 2 helical membrane-spanning segments follow: residues 202–222 (FFYFAFAAAAGISMFFTVPRL) and 238–258 (TTGNAAINIGGIVVMVSLFLW).

Interacts with psbA, but not with psbD, petB, ALB3, LPA2 or LPA3. Is not a component of the PSII complex.

The protein localises to the plastid. Its subcellular location is the chloroplast thylakoid membrane. Its function is as follows. Chaperone required for efficient photosystem II (PSII) assembly. Binds to psbA during de novo biogenesis of PSII. This Arabidopsis thaliana (Mouse-ear cress) protein is Protein LOW PSII ACCUMULATION 1, chloroplastic (LPA1).